The sequence spans 301 residues: uncharacterized protein (301 aa).

The N-terminal stretch at 1 to 22 (MPGRFTVALVIALGGTCGVADA) is a signal peptide. The GP-PDE domain maps to 31–300 (PMIVAHRAGT…DSPLAAQQWR (270 aa)).

This is an uncharacterized protein from Mycobacterium tuberculosis (strain ATCC 25618 / H37Rv).